A 124-amino-acid polypeptide reads, in one-letter code: Quinol oxidase subunit 4 (124 aa).

3 helical membrane passes run 16-36, 44-64, and 78-98; these read IVGF…AVYT, LWII…MFMH, and TLFG…IFAA.

It belongs to the cytochrome c oxidase bacterial subunit 4 family.

Its subcellular location is the cell membrane. It catalyses the reaction 2 a quinol + O2 = 2 a quinone + 2 H2O. Functionally, catalyzes quinol oxidation with the concomitant reduction of oxygen to water. Major component for energy conversion during vegetative growth. This is Quinol oxidase subunit 4 (qoxD) from Bacillus subtilis (strain 168).